The following is a 1102-amino-acid chain: Ubiquitin carboxyl-terminal hydrolase 7 (1102 aa).

Positions 1–10 (MNHQQQQQQQ) are enriched in low complexity. The tract at residues 1 to 38 (MNHQQQQQQQKAGEQQLSEPEDMEMEAGDTDDPPRITQ) is disordered. Residues 1 to 208 (MNHQQQQQQQ…APHGVAWDSK (208 aa)) are interaction with TSPYL5. Residue serine 18 is modified to Phosphoserine. Positions 19 to 31 (EPEDMEMEAGDTD) are enriched in acidic residues. Residue serine 49 is modified to Phosphoserine. Residues 53-208 (NTAEEDMEDD…APHGVAWDSK (156 aa)) are interaction with p53/TP53, MDM2 and EBNA1. An MATH domain is found at 68 to 195 (EATFQFTVER…DDKVTFEVFV (128 aa)). Positions 70 to 205 (TFQFTVERFS…QADAPHGVAW (136 aa)) are necessary for nuclear localization. Residues 214–521 (VGLKNQGATC…NAYMLVYIRE (308 aa)) enclose the USP domain. Cysteine 223 (nucleophile) is an active-site residue. The active-site Proton acceptor is histidine 464. Residues 622-801 (LWPMQARSNG…HRVDVIFCDK (180 aa)) form an interaction with ICP0/VMW110 region. At lysine 869 the chain carries N6-acetyllysine; alternate. Residue lysine 869 forms a Glycyl lysine isopeptide (Lys-Gly) (interchain with G-Cter in SUMO2); alternate linkage. A Glycyl lysine isopeptide (Lys-Gly) (interchain with G-Cter in ubiquitin); alternate cross-link involves residue lysine 869. Lysine 882 is covalently cross-linked (Glycyl lysine isopeptide (Lys-Gly) (interchain with G-Cter in SUMO2)). At serine 963 the chain carries Phosphoserine. N6-acetyllysine occurs at positions 1084 and 1096.

It belongs to the peptidase C19 family. Monomer. Homodimer. Part of a complex with DAXX, MDM2, RASSF1 and USP7. Part of a complex with DAXX, MDM2 and USP7. Interacts with MDM2; the interaction is independent of p53/TP53. Interacts with DAXX; the interaction is direct and independent of MDM2 and p53/TP53. Component of a complex composed of KMT2E/MLL5 (isoform 3), OGT (isoform 1) and USP7; the complex stabilizes KMT2E/MLL5, preventing KMT2E/MLL5 ubiquitination and proteasomal-mediated degradation. Interacts (via MATH domain) with KMT2E/MLL5 isoform 3. Interacts with OGT isoform 1. Interacts with FOXO4; the interaction is enhanced in presence of hydrogen peroxide and occurs independently of p53/TP53. Interacts with p53/TP53; the interaction is enhanced in response to DNA damage. Interacts with TSPYL5; this impairs interaction with p53/TP53. Interacts with PTEN; the interaction is direct. Interacts with ATXN1 and the strength of interaction is influenced by the length of the poly-Gln region in ATXN1. A weaker interaction seen with mutants having longer poly-Gln regions. Interacts with KIAA1530/UVSSA. Interacts with ABRAXAS2; the interaction is direct. Identified in a complex with TP53/p53 and ABRAXAS2. Interacts with MEX3C and antagonizes its ability to degrade mRNA. Interacts with DNMT1 and UHRF1. Interacts with FOXP3. Interacts (via MATH domain) with RNF220. Associated component of the Polycomb group (PcG) multiprotein PRC1-like complex. Interacts with EPOP. Interacts with OTUD4 and USP9X; the interaction is direct. Interacts with CRY2. Interacts with REST. Interacts with ERCC6. Part of a complex consisting of USP7, MAGEL2 and TRIM27; directly interacts with MAGEL2; directly interacts with TRIM27. In terms of assembly, (Microbial infection) Isoform 1 and isoform 2 interact with herpesvirus 1 trans-acting transcriptional protein ICP0/VMW110. Binding to ICP0/VMW110 may modulate the substrate specificity or activity of USP7 to stabilize viral proteins. As to quaternary structure, (Microbial infection) Interacts with Epstein-Barr virus EBNA1; the interaction is independent and simultaneous to EBNA1 interaction with USP7 as well as necessary for PML nuclear bodies disruption by EBNA1. EBNA1, USP7 and CSNK2B form a ternary complex. EBNA1 shows a 10-fold higher affinity than p53/TP53 and can compete with it for USP7 binding. (Microbial infection) Interacts with human cytomegalovirus proteins UL35 and UL35A; these interactions inhibit the ability of USP7 to form nuclear bodies. In terms of assembly, (Microbial infection) Interacts with herpes virus 8/HHV-8 proteins vIRF-1 and vIRF-3; these interactions may disrupt TP53 signaling pathway during viral infection by decreasing the availability of USP7 for deubiquitinating and stabilizing TP53. As to quaternary structure, (Microbial infection) Interacts with herpes virus 8/HHV-8 protein vIRF-2; this interaction modulates antiviral signaling via disruption of USP7 interactions with innate immune signaling proteins TRAF3 and TRAF6 thus affecting their ubiquitination. Isoform 1: Phosphorylated. Isoform 1 is phosphorylated at positions Ser-18 and Ser-963. Isoform 2: Not phosphorylated. In terms of processing, isoform 1: Polyneddylated. Isoform 2: Not Polyneddylated. Post-translationally, isoform 1 and isoform 2: Not sumoylated. Isoform 1 and isoform 2: Polyubiquitinated by herpesvirus 1 trans-acting transcriptional protein ICP0/VMW110; leading to its subsequent proteasomal degradation. Isoform 1: Ubiquitinated at Lys-869. As to expression, expressed in neural progenitor cells (at protein level). Widely expressed. Overexpressed in prostate cancer.

It localises to the nucleus. The protein resides in the cytoplasm. The protein localises to the PML body. It is found in the chromosome. The enzyme catalyses Thiol-dependent hydrolysis of ester, thioester, amide, peptide and isopeptide bonds formed by the C-terminal Gly of ubiquitin (a 76-residue protein attached to proteins as an intracellular targeting signal).. With respect to regulation, inhibited by N-ethyl-maleimide (NEM) and divalent cations. Tolerates high concentrations of NaCl but is inhibited at concentrations of 195 mM and higher. Hydrolase that deubiquitinates target proteins such as ARMC5, FOXO4, DEPTOR, KAT5, p53/TP53, MDM2, ERCC6, DNMT1, UHRF1, PTEN, KMT2E/MLL5 and DAXX. Together with DAXX, prevents MDM2 self-ubiquitination and enhances the E3 ligase activity of MDM2 towards p53/TP53, thereby promoting p53/TP53 ubiquitination and proteasomal degradation. Deubiquitinates p53/TP53, preventing degradation of p53/TP53, and enhances p53/TP53-dependent transcription regulation, cell growth repression and apoptosis. Deubiquitinates p53/TP53 and MDM2 and strongly stabilizes p53/TP53 even in the presence of excess MDM2, and also induces p53/TP53-dependent cell growth repression and apoptosis. Deubiquitination of FOXO4 in presence of hydrogen peroxide is not dependent on p53/TP53 and inhibits FOXO4-induced transcriptional activity. In association with DAXX, is involved in the deubiquitination and translocation of PTEN from the nucleus to the cytoplasm, both processes that are counteracted by PML. Deubiquitinates KMT2E/MLL5 preventing KMT2E/MLL5 proteasomal-mediated degradation. Involved in cell proliferation during early embryonic development. Involved in transcription-coupled nucleotide excision repair (TC-NER) in response to UV damage: recruited to DNA damage sites following interaction with KIAA1530/UVSSA and promotes deubiquitination of ERCC6, preventing UV-induced degradation of ERCC6. Involved in maintenance of DNA methylation via its interaction with UHRF1 and DNMT1: acts by mediating deubiquitination of UHRF1 and DNMT1, preventing their degradation and promoting DNA methylation by DNMT1. Deubiquitinates alkylation repair enzyme ALKBH3. OTUD4 recruits USP7 and USP9X to stabilize ALKBH3, thereby promoting the repair of alkylated DNA lesions. Acts as a chromatin regulator via its association with the Polycomb group (PcG) multiprotein PRC1-like complex; may act by deubiquitinating components of the PRC1-like complex. Able to mediate deubiquitination of histone H2B; it is however unsure whether this activity takes place in vivo. Exhibits a preference towards 'Lys-48'-linked ubiquitin chains. Increases regulatory T-cells (Treg) suppressive capacity by deubiquitinating and stabilizing the transcription factor FOXP3 which is crucial for Treg cell function. Plays a role in the maintenance of the circadian clock periodicity via deubiquitination and stabilization of the CRY1 and CRY2 proteins. Deubiquitinates REST, thereby stabilizing REST and promoting the maintenance of neural progenitor cells. Deubiquitinates SIRT7, inhibiting SIRT7 histone deacetylase activity and regulating gluconeogenesis. Involved in the regulation of WASH-dependent actin polymerization at the surface of endosomes and the regulation of endosomal protein recycling. It maintains optimal WASH complex activity and precise F-actin levels via deubiquitination of TRIM27 and WASHC1. Mediates the deubiquitination of phosphorylated DEPTOR, promoting its stability and leading to decreased mTORC1 signaling. Its function is as follows. (Microbial infection) Contributes to the overall stabilization and trans-activation capability of the herpesvirus 1 trans-acting transcriptional protein ICP0/VMW110 during HSV-1 infection. In terms of biological role, (Microbial infection) Upon infection with Epstein-Barr virus, the interaction with viral EBNA1 increases the association of USP7 with PML proteins, which is required for the polyubiquitylation and degradation of PML. The protein is Ubiquitin carboxyl-terminal hydrolase 7 of Homo sapiens (Human).